A 332-amino-acid polypeptide reads, in one-letter code: MGSSGSMVKPISGFLTALIQYPVPVVESRADIDKQIQQIIKTIHSTKSGYPGLELIVFPEYSTQGLNTKKWTTEEFLCTVPGPETDLFAEACKESKVYGVFSIMEKNPGGGEPYNTAVIIDPQGEMILKYRKLNPWVPVEPWKAGDLGLPVCVGPGGSKLAVCICHDGMFPEVAREAAYKGANVLIRISGYSTQVSEQWMLTNRSNAWQNLMYTLSVNLAGYDGVFYYFGEGQVCNFDGTTLVQGHRNPWEIVTAEVYPELADQARLGWGLENNIYNLGSRGYVATPGGVKENPYTFIKDLAEGKYKVPWEDEIKVKDGSIYGYPVKKTIHS.

Residues 14–259 enclose the CN hydrolase domain; that stretch reads FLTALIQYPV…WEIVTAEVYP (246 aa). E60 acts as the Proton acceptor in catalysis. The active-site Proton donor is the K132. C165 (nucleophile) is an active-site residue.

It belongs to the carbon-nitrogen hydrolase superfamily. Aliphatic amidase family.

The enzyme catalyses formamide + H2O = formate + NH4(+). In terms of biological role, is an aliphatic amidase with a restricted substrate specificity, as it only hydrolyzes formamide. In Bacillus cereus (strain G9842), this protein is Formamidase.